The chain runs to 366 residues: Probable cyclin-dependent kinase 10 (366 aa).

Positions 7 to 293 (FEKLDSIGEG…ASDAIKHPFF (287 aa)) constitute a Protein kinase domain. Residues 13 to 21 (IGEGTYGIV) and Lys36 contribute to the ATP site. The active-site Proton acceptor is Asp132. Residues 315–358 (FKNQNKKQNNNFNNFVQNNQTNQNNQTNQNNQTNQNNKTSQNNN) show a composition bias toward low complexity. Residues 315–366 (FKNQNKKQNNNFNNFVQNNQTNQNNQTNQNNQTNQNNKTSQNNNMDSYKYSK) form a disordered region.

This sequence belongs to the protein kinase superfamily. CMGC Ser/Thr protein kinase family. CDC2/CDKX subfamily.

It catalyses the reaction L-seryl-[protein] + ATP = O-phospho-L-seryl-[protein] + ADP + H(+). The catalysed reaction is L-threonyl-[protein] + ATP = O-phospho-L-threonyl-[protein] + ADP + H(+). This Dictyostelium discoideum (Social amoeba) protein is Probable cyclin-dependent kinase 10 (cdk10).